A 302-amino-acid polypeptide reads, in one-letter code: UDP-N-acetylenolpyruvoylglucosamine reductase (302 aa).

Residues 31–210 (IGGQTKVYFR…ENEVLELKKK (180 aa)) enclose the FAD-binding PCMH-type domain. Residue Arg175 is part of the active site. The Proton donor role is filled by Ser224. Glu297 is an active-site residue.

The protein belongs to the MurB family. Requires FAD as cofactor.

It localises to the cytoplasm. The catalysed reaction is UDP-N-acetyl-alpha-D-muramate + NADP(+) = UDP-N-acetyl-3-O-(1-carboxyvinyl)-alpha-D-glucosamine + NADPH + H(+). Its pathway is cell wall biogenesis; peptidoglycan biosynthesis. Functionally, cell wall formation. This Pelagibacter ubique (strain HTCC1062) protein is UDP-N-acetylenolpyruvoylglucosamine reductase.